We begin with the raw amino-acid sequence, 171 residues long: Large ribosomal subunit protein uL10 (171 aa).

The protein belongs to the universal ribosomal protein uL10 family. Part of the ribosomal stalk of the 50S ribosomal subunit. The N-terminus interacts with L11 and the large rRNA to form the base of the stalk. The C-terminus forms an elongated spine to which L12 dimers bind in a sequential fashion forming a multimeric L10(L12)X complex.

Its function is as follows. Forms part of the ribosomal stalk, playing a central role in the interaction of the ribosome with GTP-bound translation factors. In Cereibacter sphaeroides (strain ATCC 17023 / DSM 158 / JCM 6121 / CCUG 31486 / LMG 2827 / NBRC 12203 / NCIMB 8253 / ATH 2.4.1.) (Rhodobacter sphaeroides), this protein is Large ribosomal subunit protein uL10.